Here is a 922-residue protein sequence, read N- to C-terminus: DNA gyrase subunit A (922 aa).

The span at 1 to 14 (MTETPTDGGSTPPS) shows a compositional bias: low complexity. The segment at 1–24 (MTETPTDGGSTPPSDGGGPGGRIE) is disordered. One can recognise a Topo IIA-type catalytic domain in the interval 49–518 (LPDVRDGLKP…ADGDLSMEDL (470 aa)). Tyrosine 137 serves as the catalytic O-(5'-phospho-DNA)-tyrosine intermediate. Residues 545 to 551 (QRRGGKG) carry the GyrA-box motif. The segment at 861–922 (EANGDDELDE…TEPDPGESDG (62 aa)) is disordered. 2 stretches are compositionally biased toward acidic residues: residues 863-890 (NGDD…DESA) and 912-922 (DTEPDPGESDG).

This sequence belongs to the type II topoisomerase GyrA/ParC subunit family. As to quaternary structure, heterotetramer, composed of two GyrA and two GyrB chains. In the heterotetramer, GyrA contains the active site tyrosine that forms a transient covalent intermediate with DNA, while GyrB binds cofactors and catalyzes ATP hydrolysis.

Its subcellular location is the cytoplasm. It catalyses the reaction ATP-dependent breakage, passage and rejoining of double-stranded DNA.. Its function is as follows. A type II topoisomerase that negatively supercoils closed circular double-stranded (ds) DNA in an ATP-dependent manner to modulate DNA topology and maintain chromosomes in an underwound state. Negative supercoiling favors strand separation, and DNA replication, transcription, recombination and repair, all of which involve strand separation. Also able to catalyze the interconversion of other topological isomers of dsDNA rings, including catenanes and knotted rings. Type II topoisomerases break and join 2 DNA strands simultaneously in an ATP-dependent manner. The sequence is that of DNA gyrase subunit A from Nocardioides sp. (strain ATCC BAA-499 / JS614).